We begin with the raw amino-acid sequence, 285 residues long: Dermonecrotic toxin LiSicTox-alphaIA2aii (285 aa).

Residues 1–5 constitute a propeptide that is removed on maturation; sequence DVEER. His17 is a catalytic residue. Mg(2+) is bound by residues Glu37 and Asp39. The active-site Nucleophile is His53. Disulfide bonds link Cys57/Cys63 and Cys59/Cys202. Asp97 contributes to the Mg(2+) binding site. A glycan (N-linked (GlcNAc...) asparagine) is linked at Asn262.

The protein belongs to the arthropod phospholipase D family. Class II subfamily. Class IIa sub-subfamily. Requires Mg(2+) as cofactor. As to expression, expressed by the venom gland.

The protein resides in the secreted. The enzyme catalyses an N-(acyl)-sphingosylphosphocholine = an N-(acyl)-sphingosyl-1,3-cyclic phosphate + choline. It catalyses the reaction an N-(acyl)-sphingosylphosphoethanolamine = an N-(acyl)-sphingosyl-1,3-cyclic phosphate + ethanolamine. The catalysed reaction is a 1-acyl-sn-glycero-3-phosphocholine = a 1-acyl-sn-glycero-2,3-cyclic phosphate + choline. It carries out the reaction a 1-acyl-sn-glycero-3-phosphoethanolamine = a 1-acyl-sn-glycero-2,3-cyclic phosphate + ethanolamine. Dermonecrotic toxins cleave the phosphodiester linkage between the phosphate and headgroup of certain phospholipids (sphingolipid and lysolipid substrates), forming an alcohol (often choline) and a cyclic phosphate. This toxin acts on sphingomyelin (SM) with high activity. It may also act on ceramide phosphoethanolamine (CPE), lysophosphatidylcholine (LPC) and lysophosphatidylethanolamine (LPE), but not on lysophosphatidylserine (LPS), and lysophosphatidylglycerol (LPG). It acts by transphosphatidylation, releasing exclusively cyclic phosphate products as second products. Shows high hemolytic activity. Induces dermonecrosis, vascular permeability, edema, inflammatory response, and platelet aggregation. Also shows cytotoxicity against renal epithelial cells. In addition, also induces hemolysis in a complement-dependent manner and probably also in a complement-independent manner. The hemolysis provoked in a complement-independent manner may be composed of several steps. The toxin may bind to erythrocyte membranes, may hydrolyze membrane phospholipids (SM and LPC) thus generating metabolism products that may cause hemolysis, probably by provoking an increase of calcium inside cells. The calcium influx may be due to the opening of L-type calcium channels, since L-type calcium channel blockers inhibit calcium influx. In vivo, is lethal to mice when intraperitoneally injected. The protein is Dermonecrotic toxin LiSicTox-alphaIA2aii of Loxosceles intermedia (Brown spider).